Here is a 201-residue protein sequence, read N- to C-terminus: Glycerol-3-phosphate acyltransferase (201 aa).

6 helical membrane passes run methionine 10–leucine 30, leucine 60–alanine 80, alanine 86–phenylalanine 106, leucine 116–valine 136, leucine 139–leucine 159, and alanine 166–isoleucine 186.

Belongs to the PlsY family. Probably interacts with PlsX.

It localises to the cell inner membrane. The catalysed reaction is an acyl phosphate + sn-glycerol 3-phosphate = a 1-acyl-sn-glycero-3-phosphate + phosphate. The protein operates within lipid metabolism; phospholipid metabolism. Its function is as follows. Catalyzes the transfer of an acyl group from acyl-phosphate (acyl-PO(4)) to glycerol-3-phosphate (G3P) to form lysophosphatidic acid (LPA). This enzyme utilizes acyl-phosphate as fatty acyl donor, but not acyl-CoA or acyl-ACP. This chain is Glycerol-3-phosphate acyltransferase, found in Brucella suis (strain ATCC 23445 / NCTC 10510).